The sequence spans 344 residues: Sulfate/thiosulfate import ATP-binding protein CysA (344 aa).

The ABC transporter domain occupies 9-239; it reads IQVSQVSKQF…PATPFVMSFI (231 aa). 41–48 is a binding site for ATP; sequence GPSGSGKS.

Belongs to the ABC transporter superfamily. Sulfate/tungstate importer (TC 3.A.1.6) family. The complex is composed of two ATP-binding proteins (CysA), two transmembrane proteins (CysT and CysW) and a solute-binding protein (CysP).

Its subcellular location is the cell inner membrane. The catalysed reaction is sulfate(out) + ATP + H2O = sulfate(in) + ADP + phosphate + H(+). It carries out the reaction thiosulfate(out) + ATP + H2O = thiosulfate(in) + ADP + phosphate + H(+). Part of the ABC transporter complex CysAWTP involved in sulfate/thiosulfate import. Responsible for energy coupling to the transport system. In Synechococcus elongatus (strain ATCC 33912 / PCC 7942 / FACHB-805) (Anacystis nidulans R2), this protein is Sulfate/thiosulfate import ATP-binding protein CysA.